Reading from the N-terminus, the 368-residue chain is Protein Wnt-1 (368 aa).

The signal sequence occupies residues 1–25; sequence MRGPALLLALRALCALSALRGTARA. Disulfide bonds link cysteine 91/cysteine 102, cysteine 141/cysteine 149, cysteine 151/cysteine 168, cysteine 216/cysteine 230, cysteine 218/cysteine 225, cysteine 297/cysteine 328, cysteine 313/cysteine 323, cysteine 327/cysteine 367, cysteine 343/cysteine 358, cysteine 345/cysteine 355, and cysteine 350/cysteine 351. Serine 222 carries the O-palmitoleoyl serine; by PORCN lipid modification.

The protein belongs to the Wnt family. As to quaternary structure, forms a soluble 1:1 complex with AFM; this prevents oligomerization and is required for prolonged biological activity. The complex with AFM may represent the physiological form in body fluids. Interacts with PORCN. Post-translationally, N-glycosylated. N-glycosylation favors subsequent palmitoleoylation. Palmitoleoylation is required for efficient binding to frizzled receptors. Palmitoleoylation is necessary for proper trafficking to cell surface. Depalmitoleoylated by NOTUM, leading to inhibit Wnt signaling pathway.

The protein resides in the secreted. It localises to the extracellular space. Its subcellular location is the extracellular matrix. In terms of biological role, ligand for members of the frizzled family of seven transmembrane receptors. Acts in the canonical Wnt signaling pathway by promoting beta-catenin-dependent transcriptional activation. Developmental protein that promotes cell proliferation in the developing spinal cord. Has a role in osteoblast function, bone development and bone homeostasis. The protein is Protein Wnt-1 (WNT1) of Gallus gallus (Chicken).